A 73-amino-acid chain; its full sequence is Large ribosomal subunit protein bL31 (73 aa).

The protein belongs to the bacterial ribosomal protein bL31 family. Type A subfamily. As to quaternary structure, part of the 50S ribosomal subunit.

Functionally, binds the 23S rRNA. This is Large ribosomal subunit protein bL31 from Paracoccus denitrificans (strain Pd 1222).